The sequence spans 397 residues: uncharacterized protein (397 aa).

10 helical membrane passes run 2–24 (LNLL…PGIH), 44–66 (YIPF…SAFL), 92–114 (AIVL…SLFL), 124–143 (AFYC…FILY), 150–169 (SVWE…AVLY), 173–195 (AFNI…INNL), 255–277 (FIVS…VIFI), 297–319 (INTA…LNLS), 331–350 (FKFL…IIGS), and 354–373 (YLIY…LLAV).

It is found in the cell membrane. This is an uncharacterized protein from Methanocaldococcus jannaschii (strain ATCC 43067 / DSM 2661 / JAL-1 / JCM 10045 / NBRC 100440) (Methanococcus jannaschii).